An 87-amino-acid polypeptide reads, in one-letter code: Stannin (87 aa).

At 1–10 the chain is on the mitochondrial intermembrane side; that stretch reads MSIMDHSPTT. The chain crosses the membrane as a helical span at residues 11–31; that stretch reads GVVTVIVILIAIAALGALILG. Residues 32 to 87 lie on the Cytoplasmic side of the membrane; sequence CWCYLRLQRISQSEDEESIVGDGETKEPFLLVQYSAKGPCVERKAKLTPNGPEVHS. Ser49 is modified (phosphoserine).

The protein belongs to the stannin family. As to quaternary structure, monomer.

The protein localises to the mitochondrion outer membrane. Functionally, plays a role in the toxic effects of organotins. Plays a role in endosomal maturation. The protein is Stannin (SNN) of Bos taurus (Bovine).